We begin with the raw amino-acid sequence, 217 residues long: Small ribosomal subunit protein uS3 (217 aa).

The KH type-2 domain maps to 38 to 106; the sequence is IRKFINKELA…QVHINIIEIK (69 aa).

The protein belongs to the universal ribosomal protein uS3 family. Part of the 30S ribosomal subunit. Forms a tight complex with proteins S10 and S14.

Functionally, binds the lower part of the 30S subunit head. Binds mRNA in the 70S ribosome, positioning it for translation. In Streptococcus pyogenes serotype M6 (strain ATCC BAA-946 / MGAS10394), this protein is Small ribosomal subunit protein uS3.